The primary structure comprises 377 residues: Gibberellin 20 oxidase 1 (377 aa).

In terms of domain architecture, Fe2OG dioxygenase spans Glu222 to Pro322. Residues His247, Asp249, and His303 each coordinate Fe cation. The active site involves Arg313.

This sequence belongs to the iron/ascorbate-dependent oxidoreductase family. GA20OX subfamily. It depends on Fe(2+) as a cofactor. Requires L-ascorbate as cofactor. Highly expressed in stems and inflorescence tissues. Detected in seeds, roots, leaves and siliques.

The catalysed reaction is gibberellin A12 + 2 2-oxoglutarate + 3 O2 + H(+) = gibberellin A9 + 2 succinate + 3 CO2 + 2 H2O. It catalyses the reaction gibberellin A12 + 2-oxoglutarate + O2 = gibberellin A15 + succinate + CO2. It carries out the reaction gibberellin A15 + 2-oxoglutarate + O2 = gibberellin A24 + succinate + CO2 + H2O. The enzyme catalyses gibberellin A53 + 2-oxoglutarate + O2 = gibberellin A44 + succinate + CO2. Its pathway is plant hormone biosynthesis; gibberellin biosynthesis. In terms of biological role, key oxidase enzyme in the biosynthesis of gibberellin that catalyzes the conversion of GA12 to GA9, via a three-step oxidation at C-20 of the GA skeleton. GA53 is less effectively oxidized than GA12 and is only oxidized one step to GA44. Involved in the promotion of the floral transition, fertility and silique elongation, but plays only a minor role in elongation of seedling organs. Acts redundantly with GA20OX2. The protein is Gibberellin 20 oxidase 1 (GA20OX1) of Arabidopsis thaliana (Mouse-ear cress).